A 414-amino-acid polypeptide reads, in one-letter code: Isocitrate dehydrogenase [NADP] cytoplasmic (414 aa).

Ser-2 is subject to N-acetylserine. Residue Tyr-42 is modified to Phosphotyrosine. 75-77 is an NADP(+) binding site; that stretch reads TIT. Thr-77 lines the substrate pocket. Residue Lys-81 is modified to N6-acetyllysine. Arg-82 provides a ligand contact to NADP(+). Substrate is bound by residues 94 to 100 and Arg-109; that span reads SPNGTIR. Residue Lys-126 is modified to N6-succinyllysine. Substrate contacts are provided by Arg-132 and Lys-212. An N6-acetyllysine mark is found at Lys-224, Lys-233, and Lys-243. Mn(2+) is bound at residue Asp-252. Residue Lys-260 coordinates NADP(+). 2 residues coordinate Mn(2+): Asp-275 and Asp-279. NADP(+) is bound at residue 310–315; that stretch reads GTVTRH. Lys-321 carries the N6-acetyllysine modification. Residue Asn-328 coordinates NADP(+). Position 389 is a phosphoserine (Ser-389). Lys-400 carries the N6-succinyllysine modification.

Belongs to the isocitrate and isopropylmalate dehydrogenases family. In terms of assembly, homodimer. It depends on Mg(2+) as a cofactor. The cofactor is Mn(2+). Post-translationally, acetylation at Lys-374 dramatically reduces catalytic activity.

The protein resides in the cytoplasm. It is found in the cytosol. It catalyses the reaction D-threo-isocitrate + NADP(+) = 2-oxoglutarate + CO2 + NADPH. Functionally, catalyzes the NADP(+)-dependent oxidative decarboxylation of isocitrate (D-threo-isocitrate) to 2-ketoglutarate (2-oxoglutarate), which is required by other enzymes such as the phytanoyl-CoA dioxygenase. Plays a critical role in the generation of NADPH, an important cofactor in many biosynthesis pathways. May act as a corneal epithelial crystallin and may be involved in maintaining corneal epithelial transparency. The chain is Isocitrate dehydrogenase [NADP] cytoplasmic (IDH1) from Microtus ochrogaster (Prairie vole).